A 290-amino-acid polypeptide reads, in one-letter code: MKSHGTAYGAGTIINAIAVWKGSAFAIDLKTHATVELRGDLIEGEIEGGGDSRLIERACELTLDKLGVDSGAKIRTTSEIPIASGLKSSSAAANATIIATCRAARQSVDPLEMVRIGVQAALDVGVSVTGAFDDACASMLGGVVLTDNREKALLKREVLESKVVVYAPDKKAFSAQTDVKKSRLIAPWVETAFDIAMRGDYRKAMALNGFLYCSALGFSAEPILAALELGVTGVSLSGTGPSYVALVSEEGEEADRLKKAWSAYPGRVFVTEVINEGAFLLEGEECRWNT.

Position 81–91 (81–91 (PIASGLKSSSA)) interacts with ATP.

The protein belongs to the GHMP kinase family. Archaeal shikimate kinase subfamily.

Its subcellular location is the cytoplasm. The enzyme catalyses shikimate + ATP = 3-phosphoshikimate + ADP + H(+). The protein operates within metabolic intermediate biosynthesis; chorismate biosynthesis; chorismate from D-erythrose 4-phosphate and phosphoenolpyruvate: step 5/7. The chain is Shikimate kinase from Methanocella arvoryzae (strain DSM 22066 / NBRC 105507 / MRE50).